The primary structure comprises 880 residues: Pyruvate, phosphate dikinase (880 aa).

Residues 1 to 348 form an N-terminal region; it reads MNKLIYYFGN…LYILQTRTAK (348 aa). Arg-97 contributes to the ATP binding site. The segment at 349–405 is linker 1; it reads RTAIAAINIAVQMVEEKLISKEQALMRIDPESLNQLLHTRIDYSKKLTAIAEGLPAS. The segment at 406–503 is central; sequence PGAATGIVVF…VIKQGDIITI (98 aa). Residue Thr-458 is modified to Phosphothreonine; by PDRP1. Residue His-460 is the Tele-phosphohistidine intermediate of the active site. The segment at 504–538 is linker 2; that stretch reads DGGSGKIFLGEMPLIQPTFSEESTLILDWADEISS. The C-terminal stretch occupies residues 539–879; sequence LKVRANAETV…AAAQAKIKQG (341 aa). The substrate site is built by Arg-566, Arg-622, Glu-750, Gly-771, Thr-772, Asn-773, and Asp-774. Glu-750 is a binding site for Mg(2+). Asp-774 serves as a coordination point for Mg(2+). Cys-836 acts as the Proton donor in catalysis.

This sequence belongs to the PEP-utilizing enzyme family. As to quaternary structure, homodimer. Mg(2+) serves as cofactor. Phosphorylation of Thr-458 in the dark inactivates the enzyme. Dephosphorylation upon light stimulation reactivates the enzyme.

The enzyme catalyses pyruvate + phosphate + ATP = phosphoenolpyruvate + AMP + diphosphate + H(+). Its activity is regulated as follows. Activated by light-induced dephosphorylation. Inhibited by dark-induced phosphorylation. Both reactions are catalyzed by PDRP1. Functionally, catalyzes the reversible phosphorylation of pyruvate and phosphate. This is Pyruvate, phosphate dikinase (ppdK) from Rickettsia typhi (strain ATCC VR-144 / Wilmington).